The sequence spans 575 residues: Phosphoenolpyruvate-protein phosphotransferase (575 aa).

The active-site Tele-phosphohistidine intermediate is histidine 191. Phosphoenolpyruvate-binding residues include arginine 298 and arginine 334. 2 residues coordinate Mg(2+): glutamate 435 and aspartate 459. Phosphoenolpyruvate-binding positions include 458–459 (ND) and arginine 469. Cysteine 506 serves as the catalytic Proton donor.

The protein belongs to the PEP-utilizing enzyme family. Homodimer. The cofactor is Mg(2+).

Its subcellular location is the cytoplasm. It catalyses the reaction L-histidyl-[protein] + phosphoenolpyruvate = N(pros)-phospho-L-histidyl-[protein] + pyruvate. General (non sugar-specific) component of the phosphoenolpyruvate-dependent sugar phosphotransferase system (sugar PTS). This major carbohydrate active-transport system catalyzes the phosphorylation of incoming sugar substrates concomitantly with their translocation across the cell membrane. Enzyme I transfers the phosphoryl group from phosphoenolpyruvate (PEP) to the phosphoryl carrier protein (HPr). This Enterococcus faecalis (strain ATCC 700802 / V583) protein is Phosphoenolpyruvate-protein phosphotransferase (ptsI).